The sequence spans 632 residues: MEQDNLYNLLQSIDTPDDLRHLSADKLPEVCKELRQKIIDELSCNPGHFGSSLGVIELTVALHYVFNTPYDRIVWDVGHQAYGHKILTGRRDAFCTNRKLNGIRPFPSPSESEYDTFTCGHASNSISAALGMAVAAKKHGENNRHVVAVIGDGSMSGGLAFEGLNNASATPNNLLIILNDNNMAIDRSVGGMKQYLLNLQMSEGYNRIRYKISQMFHRWGILNEERRKSLIRFNNSLKSMLVQQQNVFEGMNIRYFGPIDGHDVNNLARVLKEIKDMQGPKLLHIHTTKGKGFGPAEKAATIWHAPGIFDKETGERIVVDTKGMPPLFQDVFGNTLLELAQTNDKIVGVTPAMPSGCSMNILMKAMPERGFDVGIAEGHAVTFSGGMAKDGLLPFCNIYSSFMQRAYDNVIHDIAIQKLNVVLCLDRAGLVGEDGPTHHGAFDLAYMRPIPNLIVASPYNEHELRCLMYTAQLPDKGPFVIRYPRGRGSLVDWKCPMQEIEIGKGRKLKEGKDIAVITLGPIGVQAEKAITHAEQETGKSIAHYDLRFLKPLDESMLHEIGKRFKQVVTVEDGVLKGGMGSAILEFMADNEYNPQIKRIGLPDQFVQHGSVKELYHICGMDEEGIYKVLISF.

Thiamine diphosphate-binding positions include His-79 and 120 to 122; that span reads GHA. Asp-152 contributes to the Mg(2+) binding site. Residues 153–154, Asn-181, Phe-293, and Glu-377 each bind thiamine diphosphate; that span reads GS. Asn-181 contributes to the Mg(2+) binding site.

Belongs to the transketolase family. DXPS subfamily. In terms of assembly, homodimer. Mg(2+) serves as cofactor. Thiamine diphosphate is required as a cofactor.

It catalyses the reaction D-glyceraldehyde 3-phosphate + pyruvate + H(+) = 1-deoxy-D-xylulose 5-phosphate + CO2. The protein operates within metabolic intermediate biosynthesis; 1-deoxy-D-xylulose 5-phosphate biosynthesis; 1-deoxy-D-xylulose 5-phosphate from D-glyceraldehyde 3-phosphate and pyruvate: step 1/1. In terms of biological role, catalyzes the acyloin condensation reaction between C atoms 2 and 3 of pyruvate and glyceraldehyde 3-phosphate to yield 1-deoxy-D-xylulose-5-phosphate (DXP). In Phocaeicola vulgatus (strain ATCC 8482 / DSM 1447 / JCM 5826 / CCUG 4940 / NBRC 14291 / NCTC 11154) (Bacteroides vulgatus), this protein is 1-deoxy-D-xylulose-5-phosphate synthase.